The following is a 397-amino-acid chain: Gamma tubulin complex adapter mto2 (397 aa).

The segment covering 1–13 has biased composition (basic and acidic residues); that stretch reads MSEHNYQSDREVA. 3 disordered regions span residues 1–44, 269–298, and 346–397; these read MSEH…WRAG, YTSSVDSSPQRMASDSYGRPSLHLNDPFPS, and RSDP…TPSP. 4 stretches are compositionally biased toward polar residues: residues 22–37, 269–281, 352–369, and 382–397; these read ASANQLSSNSRESTPR, YTSSVDSSPQRMA, RHVSNSTNKSSLHPSPTS, and SPASQSFPSLQDTPSP. Phosphoserine is present on residues serine 366 and serine 396.

Interacts with mto1; the interaction is direct and required for efficient binding to the gamma-tubulin complex. Interacts with gamma tubulin complex subunits alp4, alp6 and gtb1.

It localises to the cytoplasm. Its subcellular location is the cytoskeleton. The protein resides in the microtubule organizing center. The protein localises to the spindle pole body. Acts together with mto1 to promote nucleation of at least a subset of cytoplasmic microtubules, by recruiting the gamma-tubulin complex to the interphase microtubule organizing center (iMTOC) and to the equatorial MTOC (eMTOC) during anaphase. Does not appear to be required for cytoplasmic astral microtubule nucleation from the spindle pole body (SPB). Required to establish the eMTOC, and thereby to tether the cytokinetic actin ring. The sequence is that of Gamma tubulin complex adapter mto2 from Schizosaccharomyces pombe (strain 972 / ATCC 24843) (Fission yeast).